Consider the following 58-residue polypeptide: UPF0391 membrane protein GM21_0108 (58 aa).

2 consecutive transmembrane segments (helical) span residues 4–24 and 33–53; these read WALIFFIIAIIAAVFGFGGIA and VLFYLFLVVAVVMLVSALLAG.

Belongs to the UPF0391 family.

Its subcellular location is the cell membrane. This chain is UPF0391 membrane protein GM21_0108, found in Geobacter sp. (strain M21).